We begin with the raw amino-acid sequence, 104 residues long: Large ribosomal subunit protein bL21 (104 aa).

The protein belongs to the bacterial ribosomal protein bL21 family. As to quaternary structure, part of the 50S ribosomal subunit. Contacts protein L20.

Functionally, this protein binds to 23S rRNA in the presence of protein L20. In Streptococcus mutans serotype c (strain ATCC 700610 / UA159), this protein is Large ribosomal subunit protein bL21.